We begin with the raw amino-acid sequence, 105 residues long: V-type ATP synthase subunit F (105 aa).

This sequence belongs to the V-ATPase F subunit family.

In terms of biological role, produces ATP from ADP in the presence of a proton gradient across the membrane. The sequence is that of V-type ATP synthase subunit F from Fusobacterium nucleatum subsp. nucleatum (strain ATCC 25586 / DSM 15643 / BCRC 10681 / CIP 101130 / JCM 8532 / KCTC 2640 / LMG 13131 / VPI 4355).